The sequence spans 260 residues: Acetyl-coenzyme A carboxylase carboxyl transferase subunit alpha (260 aa).

One can recognise a CoA carboxyltransferase C-terminal domain in the interval 1 to 235 (MSAYDKVMAA…SNKILHSINK (235 aa)).

This sequence belongs to the AccA family. As to quaternary structure, acetyl-CoA carboxylase is a heterohexamer composed of biotin carboxyl carrier protein (AccB), biotin carboxylase (AccC) and two subunits each of ACCase subunit alpha (AccA) and ACCase subunit beta (AccD).

The protein resides in the cytoplasm. The catalysed reaction is N(6)-carboxybiotinyl-L-lysyl-[protein] + acetyl-CoA = N(6)-biotinyl-L-lysyl-[protein] + malonyl-CoA. The protein operates within lipid metabolism; malonyl-CoA biosynthesis; malonyl-CoA from acetyl-CoA: step 1/1. Component of the acetyl coenzyme A carboxylase (ACC) complex. First, biotin carboxylase catalyzes the carboxylation of biotin on its carrier protein (BCCP) and then the CO(2) group is transferred by the carboxyltransferase to acetyl-CoA to form malonyl-CoA. The polypeptide is Acetyl-coenzyme A carboxylase carboxyl transferase subunit alpha (Ruminiclostridium cellulolyticum (strain ATCC 35319 / DSM 5812 / JCM 6584 / H10) (Clostridium cellulolyticum)).